Reading from the N-terminus, the 755-residue chain is PWWP domain-containing protein 2A (755 aa).

Low complexity predominate over residues M1–P15. Residues M1–V153 form a disordered region. Residues D64–G76 show a composition bias toward pro residues. S81, S102, S116, and S119 each carry phosphoserine. Residues E112–A126 show a composition bias toward pro residues. The segment at G148–G373 is interaction with HDAC1 and MTA1. K208 is covalently cross-linked (Glycyl lysine isopeptide (Lys-Gly) (interchain with G-Cter in SUMO2)). Disordered stretches follow at residues Y282–M301, K334–A384, K400–N562, and S578–E626. Positions R292–M301 are enriched in basic residues. Composition is skewed to basic and acidic residues over residues S346–E356 and D368–K381. Positions A403–K421 are enriched in polar residues. Basic and acidic residues predominate over residues N422–N444. Residues M423–K574 are interaction with the H2A.Z/H2AZ1. Residues S508 to S527 are compositionally biased toward polar residues. The segment covering S593 to S603 has biased composition (low complexity). The 61-residue stretch at V655–N715 folds into the PWWP domain.

Component of a MTA1-specific subcomplex of the NuRD complex (M1HR), composed of PWWP2A, MTA1/2, HDAC1/2, and RBBP4/7 but does not contain CHD4 and MBD3. Interacts with MTA1; the interaction mediates the association of PWWP2A with the M1HR complex. Interacts with H2A.Z/H2AZ1. Interacts (via PWWP domain) with histone H3 trimethylated at 'Lys-36' (H3K36me3). Does not interact with CHD4 and MBD3. In terms of assembly, interacts with MTA1 and with HDAC1 in a MTA1-dependent manner. Does not interact with CHD4 and MBD3.

The protein localises to the nucleus. Chromatin-binding protein that acts as an adapter between distinct nucleosome components (H3K36me3 or H2A.Z) and chromatin-modifying complexes, contributing to the regulation of the levels of histone acetylation at actively transcribed genes. Competes with CHD4 and MBD3 for interaction with MTA1 to form a NuRD subcomplex, preventing the formation of full NuRD complex (containing CHD4 and MBD3), leading to recruitment of HDACs to gene promoters resulting in turn in the deacetylation of nearby H3K27 and H2A.Z. Plays a role in facilitating transcriptional elongation and repression of spurious transcription initiation through regulation of histone acetylation. Essential for proper mitosis progression. The polypeptide is PWWP domain-containing protein 2A (PWWP2A) (Homo sapiens (Human)).